The sequence spans 224 residues: dTDP-fucosamine acetyltransferase (224 aa).

The 131-residue stretch at proline 94–arginine 224 folds into the N-acetyltransferase domain. Residues leucine 168 to glycine 174, asparagine 201, and arginine 207 contribute to the acetyl-CoA site. Tyrosine 208 functions as the Proton donor in the catalytic mechanism.

Belongs to the WecD family. Homodimer.

The enzyme catalyses dTDP-4-amino-4,6-dideoxy-alpha-D-galactose + acetyl-CoA = dTDP-4-acetamido-4,6-dideoxy-alpha-D-galactose + CoA + H(+). Its pathway is bacterial outer membrane biogenesis; enterobacterial common antigen biosynthesis. Functionally, catalyzes the acetylation of dTDP-fucosamine (dTDP-4-amino-4,6-dideoxy-D-galactose) to dTDP-Fuc4NAc, which is utilized in the biosynthesis of the enterobacterial common antigen (ECA). The chain is dTDP-fucosamine acetyltransferase from Escherichia coli O6:H1 (strain CFT073 / ATCC 700928 / UPEC).